A 71-amino-acid polypeptide reads, in one-letter code: Protein CYSTEINE-RICH TRANSMEMBRANE MODULE 6 (71 aa).

Polar residues predominate over residues 1–12 (MSQYSQNQSSGA). The interval 1 to 36 (MSQYSQNQSSGAYPTPPVSTGPYVAPPPLGYPTNDT) is disordered. The segment covering 14 to 30 (PTPPVSTGPYVAPPPLG) has biased composition (pro residues). A helical membrane pass occupies residues 48 to 64 (SKGDGFLKGCLAAMCCC).

Belongs to the CYSTM1 family. As to quaternary structure, homodimer and heterodimers. Interacts with CYSTM7 and WIH1/CYSTM13. Mostly expressed in roots, stems, rosette leaves and siliques and, to a lower extent, in flowers and cauline leaves.

Its subcellular location is the cell membrane. The protein resides in the cytoplasm. Involved in resistance to abiotic stress. The sequence is that of Protein CYSTEINE-RICH TRANSMEMBRANE MODULE 6 from Arabidopsis thaliana (Mouse-ear cress).